Here is a 300-residue protein sequence, read N- to C-terminus: Epimerase family protein SAV0769 (300 aa).

This sequence belongs to the NAD(P)-dependent epimerase/dehydratase family. SDR39U1 subfamily.

This chain is Epimerase family protein SAV0769, found in Staphylococcus aureus (strain Mu50 / ATCC 700699).